The following is a 422-amino-acid chain: Leucine-rich repeat protein 1 (422 aa).

6 LRR repeats span residues 184 to 207 (LKNL…IGDL), 209 to 230 (HLQE…LCTS), 233 to 258 (QKSL…QFRE), 260 to 279 (TNLN…IGQL), 280 to 301 (TNLR…EFKM), and 304 to 327 (LEYL…KLQV).

In terms of assembly, component of the probable ECS(LRR1) E3 ubiquitin-protein ligase complex which contains CUL2, RBX1, Elongin BC complex and LRR1. Interacts with CUL2, RBX1, ELOB and ELOC.

It is found in the nucleus. Its pathway is protein modification; protein ubiquitination. In terms of biological role, substrate recognition subunit of an ECS (Elongin BC-CUL2/5-SOCS-box protein) E3 ubiquitin-protein ligase complex which mediates the ubiquitination and subsequent proteasomal degradation of target proteins. ECS(LRR1) ubiquitinates MCM7 and promotes CMG replisome disassembly by VCP and chromatin extraction during S-phase. May negatively regulate the 4-1BB-mediated signaling cascades which result in the activation of NK-kappaB and JNK1. The protein is Leucine-rich repeat protein 1 of Mus musculus (Mouse).